A 440-amino-acid chain; its full sequence is Transposon TyH3 Gag polyprotein (440 aa).

3 stretches are compositionally biased toward polar residues: residues M1–S23, T48–S60, and Q127–F152. Disordered stretches follow at residues M1–Q93, P126–P173, and G352–Y440. Low complexity predominate over residues T153–T165. The tract at residues N299 to H401 is RNA-binding. Residues N402–S418 are compositionally biased toward low complexity. The residue at position 416 (S416) is a Phosphoserine. The span at K419–N428 shows a compositional bias: polar residues. A compositionally biased stretch (basic and acidic residues) spans N429 to Y440.

As to quaternary structure, homotrimer.

The protein localises to the cytoplasm. Functionally, capsid protein (CA) is the structural component of the virus-like particle (VLP), forming the shell that encapsulates the retrotransposons dimeric RNA genome. The particles are assembled from trimer-clustered units and there are holes in the capsid shells that allow for the diffusion of macromolecules. CA also has nucleocapsid-like chaperone activity, promoting primer tRNA(i)-Met annealing to the multipartite primer-binding site (PBS), dimerization of Ty1 RNA and initiation of reverse transcription. The chain is Transposon TyH3 Gag polyprotein (TY1A) from Saccharomyces cerevisiae (Baker's yeast).